Reading from the N-terminus, the 698-residue chain is uncharacterized protein (698 aa).

Residues 1 to 17 form the signal peptide; the sequence is MKKRHLLSLLALGISTA. Residue C18 is the site of N-palmitoyl cysteine attachment. Residue C18 is the site of S-diacylglycerol cysteine attachment.

It to E.coli YmcA.

The protein resides in the cell membrane. This is an uncharacterized protein from Escherichia coli (strain K12).